Consider the following 293-residue polypeptide: GTP cyclohydrolase FolE2 (293 aa).

Belongs to the GTP cyclohydrolase IV family.

It carries out the reaction GTP + H2O = 7,8-dihydroneopterin 3'-triphosphate + formate + H(+). The protein operates within cofactor biosynthesis; 7,8-dihydroneopterin triphosphate biosynthesis; 7,8-dihydroneopterin triphosphate from GTP: step 1/1. Functionally, converts GTP to 7,8-dihydroneopterin triphosphate. In Pseudomonas entomophila (strain L48), this protein is GTP cyclohydrolase FolE2.